The sequence spans 50 residues: uncharacterized protein (50 aa).

An N-terminal signal peptide occupies residues Met1–Ala22.

This is an uncharacterized protein from Dictyostelium discoideum (Social amoeba).